The primary structure comprises 61 residues: Small ribosomal subunit protein uS14 (61 aa).

Positions 24, 27, 40, and 43 each coordinate Zn(2+).

This sequence belongs to the universal ribosomal protein uS14 family. Zinc-binding uS14 subfamily. Part of the 30S ribosomal subunit. Contacts proteins S3 and S10. Zn(2+) serves as cofactor.

Its function is as follows. Binds 16S rRNA, required for the assembly of 30S particles and may also be responsible for determining the conformation of the 16S rRNA at the A site. The polypeptide is Small ribosomal subunit protein uS14 (Desulforamulus reducens (strain ATCC BAA-1160 / DSM 100696 / MI-1) (Desulfotomaculum reducens)).